The following is a 120-amino-acid chain: Protein VraC (120 aa).

The sequence is that of Protein VraC from Staphylococcus epidermidis (strain ATCC 35984 / DSM 28319 / BCRC 17069 / CCUG 31568 / BM 3577 / RP62A).